Consider the following 104-residue polypeptide: Pterin-4-alpha-carbinolamine dehydratase (104 aa).

An N-acetylalanine modification is found at A2. Substrate is bound by residues 61–63 (DHH) and 78–81 (STHE).

The protein belongs to the pterin-4-alpha-carbinolamine dehydratase family. Homotetramer and homodimer. The major tissues expressing cDcoH are hypothalamus, kidney and liver.

The protein resides in the cytoplasm. It localises to the nucleus. The enzyme catalyses (4aS,6R)-4a-hydroxy-L-erythro-5,6,7,8-tetrahydrobiopterin = (6R)-L-erythro-6,7-dihydrobiopterin + H2O. Involved in tetrahydrobiopterin biosynthesis. Seems to both prevent the formation of 7-pterins and accelerate the formation of quinonoid-BH2. Coactivator for HNF1A-dependent transcription. Regulates the dimerization of homeodomain protein HNF1A and enhances its transcriptional activity. Also acts as a coactivator for HNF1B-dependent transcription. The polypeptide is Pterin-4-alpha-carbinolamine dehydratase (PCBD1) (Gallus gallus (Chicken)).